We begin with the raw amino-acid sequence, 509 residues long: Serine/threonine protein kinase OSK4 (509 aa).

The 253-residue stretch at Tyr-17–Phe-269 folds into the Protein kinase domain. ATP is bound by residues Leu-23–Val-31 and Lys-46. Catalysis depends on Asp-140, which acts as the Proton acceptor. The UBA domain occupies Met-290–Asp-330. The 49-residue stretch at Asn-460 to Val-508 folds into the KA1 domain.

It belongs to the protein kinase superfamily. Ser/Thr protein kinase family. Interacts with HDR1. In terms of tissue distribution, strongly expressed in immature seeds. Mostly expressed in panicles, leaf sheaths and roots, and to a lower extent, in germinating seeds and leaf blades.

Its subcellular location is the nucleus. The enzyme catalyses L-seryl-[protein] + ATP = O-phospho-L-seryl-[protein] + ADP + H(+). The catalysed reaction is L-threonyl-[protein] + ATP = O-phospho-L-threonyl-[protein] + ADP + H(+). Suppressor of flowering in long days (LD) via the that up-regulation of HD1 and the down-regulation of EHD1. Can phosphorylate HD1 in the presence of HDR1. The protein is Serine/threonine protein kinase OSK4 of Oryza sativa subsp. indica (Rice).